The chain runs to 472 residues: Methanethiol oxidase (472 aa).

Ala2 is subject to N-acetylalanine. 2 positions are modified to phosphoserine: Ser111 and Ser467.

This sequence belongs to the selenium-binding protein family. In terms of assembly, interacts with USP33. The N-terminus is blocked. In terms of tissue distribution, present in liver and colon (at protein level).

Its subcellular location is the nucleus. The protein resides in the cytoplasm. It localises to the cytosol. It is found in the membrane. It carries out the reaction methanethiol + O2 + H2O = hydrogen sulfide + formaldehyde + H2O2 + H(+). Its pathway is organosulfur degradation. In terms of biological role, catalyzes the oxidation of methanethiol, an organosulfur compound known to be produced in substantial amounts by gut bacteria. Selenium-binding protein which may be involved in the sensing of reactive xenobiotics in the cytoplasm. May be involved in intra-Golgi protein transport. This Rattus norvegicus (Rat) protein is Methanethiol oxidase (Selenbp1).